A 382-amino-acid polypeptide reads, in one-letter code: uncharacterized protein (382 aa).

The next 12 helical transmembrane spans lie at 14-34 (GLLLLTLAIAVLNTLVPLWLA), 45-65 (VVSSSYFTGNLVGTLLTGYVI), 79-99 (FIFAAGCAGLGLMIGFWSWLA), 102-122 (FVAGIGCAMIWVVVESALMCS), 131-151 (LLAAYMMVYYVGTFLGQLLVS), 157-177 (LMSVLPWVTGLTLAGILPLLF), 204-224 (LGVNGCIISGIVLGSLYGLMP), 235-255 (ASIGFWMAVLVSAGILGQWPI), 270-290 (VQVFVVILGSIAMLSQAAMAP), 291-311 (ALFILGAAGFTLYPVAMAWAC), 325-345 (ALLLSYTVGSLLGPSFTAMLM), and 348-368 (FSDNLLFIMIASVSFIYLLML).

The protein belongs to the major facilitator superfamily. YcaD (TC 2.A.1.26) family.

It localises to the cell inner membrane. This is an uncharacterized protein from Escherichia coli O6:K15:H31 (strain 536 / UPEC).